The primary structure comprises 188 residues: Elongation factor P (188 aa).

This sequence belongs to the elongation factor P family.

The protein resides in the cytoplasm. It functions in the pathway protein biosynthesis; polypeptide chain elongation. Its function is as follows. Involved in peptide bond synthesis. Stimulates efficient translation and peptide-bond synthesis on native or reconstituted 70S ribosomes in vitro. Probably functions indirectly by altering the affinity of the ribosome for aminoacyl-tRNA, thus increasing their reactivity as acceptors for peptidyl transferase. The chain is Elongation factor P from Chlorobium limicola (strain DSM 245 / NBRC 103803 / 6330).